Consider the following 3262-residue polypeptide: Striated muscle-specific serine/threonine-protein kinase (3262 aa).

The tract at residues 1–33 (MQKARGTRGEDAGTRAPPSPGVPPKRAKVGAGR) is disordered. Omega-N-methylarginine is present on Arg-33. Positions 45–126 (PVFLRPLKNA…GQASCEAVLT (82 aa)) constitute an Ig-like 1 domain. A Phosphoserine modification is found at Ser-141. 4 disordered regions span residues 155–185 (RAFS…TSEE), 198–226 (EQEA…GPRH), 280–720 (GLHR…VSAG), and 814–875 (LAVR…APPT). A compositionally biased stretch (polar residues) spans 158–185 (STPTGGSDTLVGTSLDTPPTSVTGTSEE). Residues 301 to 317 (PALPPPSKSALLPPPSP) show a composition bias toward pro residues. Residues Ser-368 and Ser-375 each carry the phosphoserine modification. A Phosphothreonine modification is found at Thr-379. 2 positions are modified to phosphoserine: Ser-382 and Ser-385. A compositionally biased stretch (basic and acidic residues) spans 404–422 (ILDKLQFFEERRRSLERSD). At Ser-423 the chain carries Phosphoserine. Phosphothreonine is present on Thr-453. Phosphoserine occurs at positions 457, 463, 493, 511, and 531. The span at 459-473 (EELRSPRGSVAERRR) shows a compositional bias: basic and acidic residues. Basic and acidic residues predominate over residues 510 to 522 (TSREELVRSHESL). Residues 543-552 (RPSTPKTSRA) are compositionally biased toward polar residues. Ser-554 is modified (phosphoserine). 2 stretches are compositionally biased toward basic and acidic residues: residues 624–638 (PESR…KREP) and 663–680 (EKNR…RGPE). In terms of domain architecture, Ig-like 2 spans 727 to 815 (PVFEIPLQNM…GQATCASSLA (89 aa)). A compositionally biased stretch (polar residues) spans 820 to 830 (GSTSPFSSPIT). 3 Ig-like domains span residues 874-963 (PTFK…ARLE), 968-1062 (PESR…ARLT), and 1069-1157 (PLFT…AQLY). A disulfide bond links Cys-994 and Cys-1046. Ser-1133 and Ser-1177 each carry phosphoserine. The tract at residues 1162-1185 (RTAASGPSSKLEKMPSIPEEPEHG) is disordered. An Ig-like 6 domain is found at 1193 to 1283 (PDFLRPLQDL…AACYAHLYVT (91 aa)). One can recognise a Fibronectin type-III 1 domain in the interval 1290 to 1387 (PDGAPEVVAV…PSEPVQLLEH (98 aa)). 2 Ig-like domains span residues 1389–1485 (PPLE…VTLE) and 1490–1578 (PRFE…AELS). A disulfide bond links Cys-1413 and Cys-1469. The Protein kinase 1 domain occupies 1606-1859 (YDIHQEIGRG…AEETLEHPWF (254 aa)). ATP contacts are provided by residues 1612–1620 (IGRGAFSYL) and Lys-1635. Asp-1724 functions as the Proton acceptor in the catalytic mechanism. Residues 1913 to 2571 (MPRRQPPSGG…SQPNLSSSVQ (659 aa)) are disordered. A compositionally biased stretch (low complexity) spans 1918 to 1927 (PPSGGLSSSS). The span at 1980–1990 (EQERTPSKDQE) shows a compositional bias: basic and acidic residues. A phosphoserine mark is found at Ser-1993, Ser-2004, Ser-2019, Ser-2020, and Ser-2042. Over residues 2009–2019 (SPRRPELRRGS) the composition is skewed to basic and acidic residues. Arg-2060 is subject to Asymmetric dimethylarginine; alternate. Arg-2060 carries the omega-N-methylarginine; alternate modification. Low complexity predominate over residues 2069-2081 (AQRLQALRQRLLR). Phosphoserine is present on residues Ser-2114 and Ser-2135. Arg-2144 carries the post-translational modification Omega-N-methylarginine. Over residues 2168–2179 (ESPSLSALSETQ) the composition is skewed to polar residues. 2 positions are modified to phosphoserine: Ser-2182 and Ser-2207. The span at 2193–2207 (ITKSPEPSAVTSRDS) shows a compositional bias: polar residues. Residues 2208 to 2218 (PQPPEPQPVPE) are compositionally biased toward pro residues. The span at 2219–2229 (KVPEPKPEPVR) shows a compositional bias: basic and acidic residues. Over residues 2230 to 2268 (AAKPAQPPLALQMPTQPLTPYAQIMQSLQLSSPTLSPQD) the composition is skewed to low complexity. The span at 2337–2348 (FEAKFKRSRESP) shows a compositional bias: basic and acidic residues. Positions 2349-2358 (LSRGLRLLSR) are enriched in low complexity. Residues 2359–2375 (SRSEERGPFRGAEDDGI) show a composition bias toward basic and acidic residues. Phosphoserine is present on Ser-2379. At Thr-2383 the chain carries Phosphothreonine. Over residues 2387 to 2398 (LVRRPERSRSVQ) the composition is skewed to basic and acidic residues. 6 positions are modified to phosphoserine: Ser-2413, Ser-2417, Ser-2441, Ser-2442, Ser-2447, and Ser-2451. Low complexity predominate over residues 2461–2487 (SSTLERLSSRLQRSGSSEDSGGASGRS). Polar residues predominate over residues 2513–2523 (QLGSQTGATTP). A phosphoserine mark is found at Ser-2524 and Ser-2527. The segment covering 2524-2543 (SAESLGSEASGTSGSSAPGE) has biased composition (low complexity). Residues 2546-2557 (SRHRWGLSRLRK) are compositionally biased toward basic residues. Position 2562 is a phosphoserine (Ser-2562). Residues 2562 to 2571 (SQPNLSSSVQ) show a composition bias toward polar residues. One can recognise an Ig-like 9 domain in the interval 2586–2676 (PPVFHIKLKD…GSITSSCTVA (91 aa)). An intrachain disulfide couples Cys-2608 to Cys-2660. In terms of domain architecture, Fibronectin type-III 2 spans 2683–2777 (KLAPPEVPQT…KVFIRGTPDS (95 aa)). Disordered stretches follow at residues 2756–2832 (RAGQ…MSAN), 2857–2899 (ATQQ…PAPS), and 2912–2960 (APPA…PQKP). Thr-2774 carries the phosphothreonine modification. Composition is skewed to low complexity over residues 2775 to 2789 (PDSP…RDAP) and 2803 to 2831 (PTSL…SMSA). Ser-2777 bears the Phosphoserine mark. A Fibronectin type-III 3 domain is found at 2865 to 2968 (PPSIVVTPSE…KPYTFLEEKA (104 aa)). A compositionally biased stretch (polar residues) spans 2883 to 2899 (GTLTPTSSPQGVKPAPS). The segment covering 2913–2927 (PPAPQAPAPEPPPEP) has biased composition (pro residues). Over residues 2943–2953 (SSPTPESTTLR) the composition is skewed to polar residues. Residue Ser-2944 is modified to Phosphoserine. In terms of domain architecture, Protein kinase 2 spans 2946-3213 (TPESTTLRQG…LQDCLAHPWL (268 aa)). Asp-3080 serves as the catalytic Proton acceptor.

This sequence belongs to the protein kinase superfamily. CAMK Ser/Thr protein kinase family. In terms of assembly, interacts with MTM1. Isoform 3 is found as a monomer or homodimer. May be autophosphorylated. Isoform 1 is preferentially expressed in striated muscle. Non-kinase form such as isoform 3 is predominantly expressed in the aorta. Isoform 3 appears to be expressed only in highly differentiated ASMC in normal vessel walls and down-regulated in dedifferentiated ASMC in vivo. In response to vascular injuries ASMC dedifferentiate and change from a quiescent and contractile phenotype to a proliferative and synthetic phenotype. This proliferation of vascular smooth muscle cells is one of the most prominent features of atherosclerosis. Isoform 1 and isoform 4 are expressed in cardiomyocytes of the developing heart.

The protein localises to the nucleus. The enzyme catalyses L-seryl-[protein] + ATP = O-phospho-L-seryl-[protein] + ADP + H(+). It catalyses the reaction L-threonyl-[protein] + ATP = O-phospho-L-threonyl-[protein] + ADP + H(+). In terms of biological role, isoform 3 may have a role in regulating the growth and differentiation of arterial smooth muscle cells. The polypeptide is Striated muscle-specific serine/threonine-protein kinase (Speg) (Mus musculus (Mouse)).